The sequence spans 149 residues: Nucleoside diphosphate kinase (149 aa).

ATP-binding residues include K9, F57, R85, T91, R102, and N112. H115 (pros-phosphohistidine intermediate) is an active-site residue.

The protein belongs to the NDK family. In terms of assembly, homotetramer. Mg(2+) is required as a cofactor.

The protein resides in the cytoplasm. It carries out the reaction a 2'-deoxyribonucleoside 5'-diphosphate + ATP = a 2'-deoxyribonucleoside 5'-triphosphate + ADP. It catalyses the reaction a ribonucleoside 5'-diphosphate + ATP = a ribonucleoside 5'-triphosphate + ADP. In terms of biological role, major role in the synthesis of nucleoside triphosphates other than ATP. The ATP gamma phosphate is transferred to the NDP beta phosphate via a ping-pong mechanism, using a phosphorylated active-site intermediate. The protein is Nucleoside diphosphate kinase of Staphylococcus haemolyticus (strain JCSC1435).